Here is a 625-residue protein sequence, read N- to C-terminus: Phosphomethylpyrimidine synthase (625 aa).

Residues Asn230, Met259, Tyr288, His324, 344–346 (SRG), 385–388 (DGLR), and Glu424 contribute to the substrate site. Residue His428 participates in Zn(2+) binding. Tyr451 serves as a coordination point for substrate. His492 serves as a coordination point for Zn(2+). [4Fe-4S] cluster is bound by residues Cys572, Cys575, and Cys580.

The protein belongs to the ThiC family. Homodimer. Requires [4Fe-4S] cluster as cofactor.

It catalyses the reaction 5-amino-1-(5-phospho-beta-D-ribosyl)imidazole + S-adenosyl-L-methionine = 4-amino-2-methyl-5-(phosphooxymethyl)pyrimidine + CO + 5'-deoxyadenosine + formate + L-methionine + 3 H(+). The protein operates within cofactor biosynthesis; thiamine diphosphate biosynthesis. Its function is as follows. Catalyzes the synthesis of the hydroxymethylpyrimidine phosphate (HMP-P) moiety of thiamine from aminoimidazole ribotide (AIR) in a radical S-adenosyl-L-methionine (SAM)-dependent reaction. In Xanthomonas euvesicatoria pv. vesicatoria (strain 85-10) (Xanthomonas campestris pv. vesicatoria), this protein is Phosphomethylpyrimidine synthase.